The sequence spans 669 residues: DNA mismatch repair protein MutL (669 aa).

Disordered stretches follow at residues 354–402 (NRPA…ENPY) and 448–479 (TVSH…PLES). The span at 448–468 (TVSHDSPPNRTAPDATTSSSK) shows a compositional bias: polar residues.

Belongs to the DNA mismatch repair MutL/HexB family.

This protein is involved in the repair of mismatches in DNA. It is required for dam-dependent methyl-directed DNA mismatch repair. May act as a 'molecular matchmaker', a protein that promotes the formation of a stable complex between two or more DNA-binding proteins in an ATP-dependent manner without itself being part of a final effector complex. The polypeptide is DNA mismatch repair protein MutL (Pectobacterium carotovorum subsp. carotovorum (strain PC1)).